Here is a 342-residue protein sequence, read N- to C-terminus: Nicotinate-nucleotide--dimethylbenzimidazole phosphoribosyltransferase (342 aa).

Glu-311 acts as the Proton acceptor in catalysis.

This sequence belongs to the CobT family.

The catalysed reaction is 5,6-dimethylbenzimidazole + nicotinate beta-D-ribonucleotide = alpha-ribazole 5'-phosphate + nicotinate + H(+). It functions in the pathway nucleoside biosynthesis; alpha-ribazole biosynthesis; alpha-ribazole from 5,6-dimethylbenzimidazole: step 1/2. Functionally, catalyzes the synthesis of alpha-ribazole-5'-phosphate from nicotinate mononucleotide (NAMN) and 5,6-dimethylbenzimidazole (DMB). The chain is Nicotinate-nucleotide--dimethylbenzimidazole phosphoribosyltransferase from Vibrio atlanticus (strain LGP32) (Vibrio splendidus (strain Mel32)).